An 84-amino-acid polypeptide reads, in one-letter code: MNLFDFFRASKKVSTASVAKERLQIIVAHERGQRSTPDYLPALQKELVEVIRKYVNIGSDDVHVALENQGSCSILELNITLPDR.

The protein belongs to the MinE family.

Prevents the cell division inhibition by proteins MinC and MinD at internal division sites while permitting inhibition at polar sites. This ensures cell division at the proper site by restricting the formation of a division septum at the midpoint of the long axis of the cell. This chain is Cell division topological specificity factor, found in Pseudomonas fluorescens (strain ATCC BAA-477 / NRRL B-23932 / Pf-5).